The primary structure comprises 185 residues: Adenylate kinase (185 aa).

8–16 provides a ligand contact to ATP; that stretch reads GIPGSGSTT.

The protein belongs to the archaeal adenylate kinase family.

The protein localises to the cytoplasm. It catalyses the reaction AMP + ATP = 2 ADP. The polypeptide is Adenylate kinase (adkA) (Methanothermobacter thermautotrophicus (strain ATCC 29096 / DSM 1053 / JCM 10044 / NBRC 100330 / Delta H) (Methanobacterium thermoautotrophicum)).